We begin with the raw amino-acid sequence, 794 residues long: Zinc finger protein 148 (794 aa).

A Glycyl lysine isopeptide (Lys-Gly) (interchain with G-Cter in SUMO2) cross-link involves residue lysine 6. Residue serine 51 is modified to Phosphoserine. Glycyl lysine isopeptide (Lys-Gly) (interchain with G-Cter in SUMO2) cross-links involve residues lysine 88, lysine 115, and lysine 132. The C2H2-type 1 zinc-finger motif lies at histidine 171–histidine 193. Threonine 194 carries the phosphothreonine modification. C2H2-type zinc fingers lie at residues phenylalanine 199 to histidine 221 and phenylalanine 227 to histidine 249. A Phosphoserine modification is found at serine 250. The segment at tyrosine 255 to histidine 278 adopts a C2H2-type 4 zinc-finger fold. Lysine 291 participates in a covalent cross-link: Glycyl lysine isopeptide (Lys-Gly) (interchain with G-Cter in SUMO2). Residues glutamate 298 to serine 336 are disordered. Phosphoserine is present on residues serine 301 and serine 306. Lysine 308 is covalently cross-linked (Glycyl lysine isopeptide (Lys-Gly) (interchain with G-Cter in SUMO2)). Over residues glutamate 321–serine 336 the composition is skewed to basic and acidic residues. Lysine 356 is covalently cross-linked (Glycyl lysine isopeptide (Lys-Gly) (interchain with G-Cter in SUMO1); alternate). A Glycyl lysine isopeptide (Lys-Gly) (interchain with G-Cter in SUMO2); alternate cross-link involves residue lysine 356. A Glycyl lysine isopeptide (Lys-Gly) (interchain with G-Cter in SUMO2) cross-link involves residue lysine 402. Serine 412 is subject to Phosphoserine. Glycyl lysine isopeptide (Lys-Gly) (interchain with G-Cter in SUMO2) cross-links involve residues lysine 421 and lysine 424. The segment covering asparagine 574–glycine 588 has biased composition (polar residues). Residues asparagine 574–serine 596 form a disordered region. Lysine 607 carries the post-translational modification N6-acetyllysine. Serine 665 and serine 784 each carry phosphoserine.

This sequence belongs to the krueppel C2H2-type zinc-finger protein family. As to quaternary structure, interacts with HNRNPDL. Interacts with the 5FMC complex; the interaction requires association with CHTOP. Interacts with CAVIN1. Post-translationally, sumoylated with SUMO2. Desumoylated by SENP3, resulting in the stimulation of transcription of its target genes.

The protein localises to the nucleus. In terms of biological role, involved in transcriptional regulation. Represses the transcription of a number of genes including gastrin, stromelysin and enolase. Binds to the G-rich box in the enhancer region of these genes. The protein is Zinc finger protein 148 (ZNF148) of Homo sapiens (Human).